A 156-amino-acid polypeptide reads, in one-letter code: Protein Smg homolog (156 aa).

Belongs to the Smg family.

This is Protein Smg homolog from Halorhodospira halophila (strain DSM 244 / SL1) (Ectothiorhodospira halophila (strain DSM 244 / SL1)).